The primary structure comprises 496 residues: Glutamyl-tRNA(Gln) amidotransferase subunit A (496 aa).

Catalysis depends on charge relay system residues lysine 75 and serine 150. Serine 174 serves as the catalytic Acyl-ester intermediate.

It belongs to the amidase family. GatA subfamily. As to quaternary structure, heterotrimer of A, B and C subunits.

It catalyses the reaction L-glutamyl-tRNA(Gln) + L-glutamine + ATP + H2O = L-glutaminyl-tRNA(Gln) + L-glutamate + ADP + phosphate + H(+). Allows the formation of correctly charged Gln-tRNA(Gln) through the transamidation of misacylated Glu-tRNA(Gln) in organisms which lack glutaminyl-tRNA synthetase. The reaction takes place in the presence of glutamine and ATP through an activated gamma-phospho-Glu-tRNA(Gln). In Burkholderia mallei (strain NCTC 10247), this protein is Glutamyl-tRNA(Gln) amidotransferase subunit A.